A 384-amino-acid chain; its full sequence is CDP-diacylglycerol--serine O-phosphatidyltransferase (384 aa).

It belongs to the CDP-alcohol phosphatidyltransferase class-I family.

The protein resides in the membrane. It carries out the reaction a CDP-1,2-diacyl-sn-glycerol + L-serine = a 1,2-diacyl-sn-glycero-3-phospho-L-serine + CMP + H(+). It functions in the pathway phospholipid metabolism; phosphatidylethanolamine biosynthesis; phosphatidylethanolamine from CDP-diacylglycerol: step 1/2. In Encephalitozoon cuniculi (strain GB-M1) (Microsporidian parasite), this protein is CDP-diacylglycerol--serine O-phosphatidyltransferase (PSS).